Reading from the N-terminus, the 113-residue chain is UPF0102 protein SUN_0231 (113 aa).

This sequence belongs to the UPF0102 family.

The sequence is that of UPF0102 protein SUN_0231 from Sulfurovum sp. (strain NBC37-1).